Consider the following 305-residue polypeptide: UDP-3-O-acyl-N-acetylglucosamine deacetylase (305 aa).

3 residues coordinate Zn(2+): histidine 79, histidine 238, and aspartate 242. The Proton donor role is filled by histidine 265.

It belongs to the LpxC family. The cofactor is Zn(2+).

It carries out the reaction a UDP-3-O-[(3R)-3-hydroxyacyl]-N-acetyl-alpha-D-glucosamine + H2O = a UDP-3-O-[(3R)-3-hydroxyacyl]-alpha-D-glucosamine + acetate. It functions in the pathway glycolipid biosynthesis; lipid IV(A) biosynthesis; lipid IV(A) from (3R)-3-hydroxytetradecanoyl-[acyl-carrier-protein] and UDP-N-acetyl-alpha-D-glucosamine: step 2/6. Its function is as follows. Catalyzes the hydrolysis of UDP-3-O-myristoyl-N-acetylglucosamine to form UDP-3-O-myristoylglucosamine and acetate, the committed step in lipid A biosynthesis. This chain is UDP-3-O-acyl-N-acetylglucosamine deacetylase, found in Escherichia fergusonii (strain ATCC 35469 / DSM 13698 / CCUG 18766 / IAM 14443 / JCM 21226 / LMG 7866 / NBRC 102419 / NCTC 12128 / CDC 0568-73).